The chain runs to 56 residues: UPF0291 protein Clos_1191 (56 aa).

It belongs to the UPF0291 family.

It localises to the cytoplasm. The protein is UPF0291 protein Clos_1191 of Alkaliphilus oremlandii (strain OhILAs) (Clostridium oremlandii (strain OhILAs)).